We begin with the raw amino-acid sequence, 238 residues long: 4-hydroxy-tetrahydrodipicolinate reductase (238 aa).

12–17 lines the NAD(+) pocket; the sequence is GASGRM. Position 40 (arginine 40) interacts with NADP(+). NAD(+)-binding positions include 93–95 and 117–120; these read GTT and ASNF. Histidine 149 functions as the Proton donor/acceptor in the catalytic mechanism. Histidine 150 serves as a coordination point for (S)-2,3,4,5-tetrahydrodipicolinate. Catalysis depends on lysine 153, which acts as the Proton donor. (S)-2,3,4,5-tetrahydrodipicolinate is bound at residue 159 to 160; that stretch reads GT.

Belongs to the DapB family.

It is found in the cytoplasm. The catalysed reaction is (S)-2,3,4,5-tetrahydrodipicolinate + NAD(+) + H2O = (2S,4S)-4-hydroxy-2,3,4,5-tetrahydrodipicolinate + NADH + H(+). It catalyses the reaction (S)-2,3,4,5-tetrahydrodipicolinate + NADP(+) + H2O = (2S,4S)-4-hydroxy-2,3,4,5-tetrahydrodipicolinate + NADPH + H(+). It participates in amino-acid biosynthesis; L-lysine biosynthesis via DAP pathway; (S)-tetrahydrodipicolinate from L-aspartate: step 4/4. Catalyzes the conversion of 4-hydroxy-tetrahydrodipicolinate (HTPA) to tetrahydrodipicolinate. In Xanthomonas axonopodis pv. citri (strain 306), this protein is 4-hydroxy-tetrahydrodipicolinate reductase.